Here is a 199-residue protein sequence, read N- to C-terminus: V-type ATP synthase subunit E (199 aa).

It belongs to the V-ATPase E subunit family.

Functionally, produces ATP from ADP in the presence of a proton gradient across the membrane. In Borreliella afzelii (strain PKo) (Borrelia afzelii), this protein is V-type ATP synthase subunit E.